The primary structure comprises 796 residues: Cadherin-11 (796 aa).

An N-terminal signal peptide occupies residues 1–22 (MKENYCLQAALVCLGMLCHSHA). The propeptide occupies 23-53 (FAPERRGHLRPSFHGHHEKGKEGQVLQRSKR). Cadherin domains follow at residues 54–159 (GWVW…PPEF), 160–268 (LHET…PPKF), 269–383 (PQSV…PPMF), 384–486 (LAPS…DNAP), and 487–612 (KFAA…YILN). At 54-617 (GWVWNQFFVI…AYILNAGLST (564 aa)) the chain is on the extracellular side. Asn455 and Asn540 each carry an N-linked (GlcNAc...) asparagine glycan. Residues 618–640 (GALIAILACIVILLVIVVLFVTL) form a helical membrane-spanning segment. The Cytoplasmic portion of the chain corresponds to 641–796 (RRQKKEPLIV…GSKDTFDDDS (156 aa)). Position 788 is a phosphoserine (Ser788). The residue at position 791 (Thr791) is a Phosphothreonine.

In terms of assembly, interacts with PCDH8. As to expression, expressed mainly in brain but also found in other tissues. Expressed in neuroblasts. In the embryo from 67 to 72 days of gestation, detected at high levels in facial mesenchyme including the central palatal mesenchyme, dental mesenchyme, the eye and optic muscle, and the tongue (at protein level).

It is found in the cell membrane. Cadherins are calcium-dependent cell adhesion proteins. They preferentially interact with themselves in a homophilic manner in connecting cells; cadherins may thus contribute to the sorting of heterogeneous cell types. Required for proper focal adhesion assembly. Involved in the regulation of cell migration. This Homo sapiens (Human) protein is Cadherin-11 (CDH11).